The primary structure comprises 83 residues: MSDSPCLSPPAPSQGPTTPRKGPPKFKQRQTRQFKSKPPKKGVKGFGDDIPGMEGLGTDITVICPWEAFSHLELHELAQFGII.

The interval 1-51 (MSDSPCLSPPAPSQGPTTPRKGPPKFKQRQTRQFKSKPPKKGVKGFGDDIP) is disordered. The span at 22–43 (GPPKFKQRQTRQFKSKPPKKGV) shows a compositional bias: basic residues.

The protein belongs to the rod/cone cGMP-PDE gamma subunit family. In terms of assembly, tetramer composed of two catalytic chains (alpha and beta), and two inhibitory chains (gamma).

The enzyme catalyses 3',5'-cyclic GMP + H2O = GMP + H(+). In terms of biological role, participates in processes of transmission and amplification of the visual signal. cGMP-PDEs are the effector molecules in G-protein-mediated phototransduction in vertebrate rods and cones. This chain is Retinal cone rhodopsin-sensitive cGMP 3',5'-cyclic phosphodiesterase subunit gamma (Pde6h), found in Rattus norvegicus (Rat).